We begin with the raw amino-acid sequence, 442 residues long: Syndecan-3 (442 aa).

Disordered stretches follow at residues 1-24 (MKPG…AAAG) and 57-87 (RPVD…SGYF). Residues 1–387 (MKPGPPHRAG…SILERKEVLV (387 aa)) lie on the Extracellular side of the membrane. Over residues 13–24 (HGAGAGAGAAAG) the composition is skewed to gly residues. Positions 63–77 (GSGDDDSFPDDELDD) are enriched in acidic residues. Residues S80, S82, S84, and S91 are each glycosylated (O-linked (Xyl...) (glycosaminoglycan) serine). S108 carries O-linked (GalNAc) serine; by GALNT13 glycosylation. O-linked (GalNAc) threonine; by GALNT13 glycans are attached at residues T109 and T110. Disordered stretches follow at residues 150 to 173 (EEPS…STGD), 225 to 326 (TTPE…ETTQ), and 340 to 367 (AAKA…AIDS). Low complexity-rich tracts occupy residues 156–173 (ATTV…STGD), 225–238 (TTPE…TAAV), and 275–286 (TLPLGTTAPGPT). O-linked (GalNAc) serine; by GALNT13 glycosylation is present at S160. T161, T162, and T169 each carry an O-linked (GalNAc) threonine; by GALNT13 glycan. A glycan (O-linked (GalNAc) serine; by GALNT13) is linked at S170. T171 carries an O-linked (GalNAc) threonine; by GALNT13 glycan. Positions 288 to 299 (VAQTPTPETFLT) are enriched in polar residues. O-linked (Xyl...) (glycosaminoglycan) serine glycans are attached at residues S314 and S367. A helical membrane pass occupies residues 388-408 (AVIVGGVVGALFAAFLVTLLI). Y409, Y419, Y431, and Y441 each carry phosphotyrosine. Residues 409–442 (YRMKKKDEGSYTLEEPKQASVTYQKPDKQEEFYA) lie on the Cytoplasmic side of the membrane. Positions 419-442 (YTLEEPKQASVTYQKPDKQEEFYA) are disordered. Residues 433–442 (KPDKQEEFYA) show a composition bias toward basic and acidic residues.

Belongs to the syndecan proteoglycan family. Interacts with TIAM1. Interacts with PTN (via heparan sulfate chains); this interaction mediates the neurite outgrowth-promoting signal from PTN to the cytoskeleton of growing neurites; this interaction mediates osteoblast recruitment. Interacts with MDK; this interaction induces SDC3 clustering; this interaction induces neuronal cell adhesion and neurite outgrowth. In terms of processing, O-glycosylated within the Thr/Ser-rich region which could interact with lectin domains on other molecules. Expressed in the nervous system, the adrenal gland, and the spleen.

Its subcellular location is the cell membrane. Its function is as follows. Cell surface proteoglycan that may bear heparan sulfate. May have a role in the organization of cell shape by affecting the actin cytoskeleton, possibly by transferring signals from the cell surface in a sugar-dependent mechanism. The chain is Syndecan-3 (SDC3) from Homo sapiens (Human).